The chain runs to 314 residues: MIEFEKPNIHKVEETDNYGKFVVEPLERGYGTTLGNSLRRVLIASLPGAAITSMQIDGVLHEFSTVEGVTEDVTQIILNLKKVSLKLDSEDQKNLELDVKGPAEVTASDIQGDNEVTILNPDLHIATVADGAELHIKLTADKGRGYLSANDNKARMDDLAIGVLPIDSIYTPIERVNYTVENARVGQRNDYDKLTLDVWTDGSLTPTEAVSLGAKILTEHLAMFVDLTETAQNAQVMVEKEETHKEKMLEMTIEELDLSVRSYNCLKRAGINTVKELTDRTVSDMMKVRNLGQKSLEEIKLKLNDLGVSFRQDD.

Residues 1 to 228 (MIEFEKPNIH…EHLAMFVDLT (228 aa)) are alpha N-terminal domain (alpha-NTD). Residues 245-314 (KEKMLEMTIE…DLGVSFRQDD (70 aa)) form an alpha C-terminal domain (alpha-CTD) region.

The protein belongs to the RNA polymerase alpha chain family. In terms of assembly, homodimer. The RNAP catalytic core consists of 2 alpha, 1 beta, 1 beta' and 1 omega subunit. When a sigma factor is associated with the core the holoenzyme is formed, which can initiate transcription.

The catalysed reaction is RNA(n) + a ribonucleoside 5'-triphosphate = RNA(n+1) + diphosphate. DNA-dependent RNA polymerase catalyzes the transcription of DNA into RNA using the four ribonucleoside triphosphates as substrates. In Limosilactobacillus reuteri (strain DSM 20016) (Lactobacillus reuteri), this protein is DNA-directed RNA polymerase subunit alpha.